The primary structure comprises 658 residues: ATP-dependent zinc metalloprotease FtsH 4 (658 aa).

Residues 1 to 22 are disordered; sequence MREPTNRQGSPGPGEPRPPAQG. Residues 1–28 are Cytoplasmic-facing; that stretch reads MREPTNRQGSPGPGEPRPPAQGRPRFPT. Residues 29 to 49 traverse the membrane as a helical segment; the sequence is WILWVALLALALWNVYTFFWP. Over 50-149 the chain is Extracellular; that stretch reads SSGARLNIPY…TVKIDQAGGS (100 aa). The tract at residues 95-114 is disordered; it reads QVLSPGDPVPPGTSPNEIRT. A helical membrane pass occupies residues 150-170; the sequence is VWPSLLATIVPLFLFIGLMVY. Residues 171 to 658 are Cytoplasmic-facing; sequence LGRSMSRGQQ…AAPAAAADSV (488 aa). Residue 243 to 250 coordinates ATP; the sequence is GPPGTGKT. His464 lines the Zn(2+) pocket. Glu465 is a catalytic residue. Residues His468 and Asp540 each contribute to the Zn(2+) site.

In the central section; belongs to the AAA ATPase family. This sequence in the C-terminal section; belongs to the peptidase M41 family. Homohexamer. Zn(2+) serves as cofactor.

The protein resides in the cell membrane. In terms of biological role, acts as a processive, ATP-dependent zinc metallopeptidase for both cytoplasmic and membrane proteins. Plays a role in the quality control of integral membrane proteins. The chain is ATP-dependent zinc metalloprotease FtsH 4 (ftsh4) from Sphaerobacter thermophilus (strain ATCC 49802 / DSM 20745 / KCCM 41009 / NCIMB 13125 / S 6022).